Reading from the N-terminus, the 467-residue chain is Glutamate--tRNA ligase (467 aa).

The 'HIGH' region signature appears at 9–19; it reads PSPTGYLHIGG. The short motif at 237-241 is the 'KMSKS' region element; that stretch reads KLSKR. Lys-240 contributes to the ATP binding site.

Belongs to the class-I aminoacyl-tRNA synthetase family. Glutamate--tRNA ligase type 1 subfamily. As to quaternary structure, monomer.

The protein localises to the cytoplasm. It carries out the reaction tRNA(Glu) + L-glutamate + ATP = L-glutamyl-tRNA(Glu) + AMP + diphosphate. Functionally, catalyzes the attachment of glutamate to tRNA(Glu) in a two-step reaction: glutamate is first activated by ATP to form Glu-AMP and then transferred to the acceptor end of tRNA(Glu). This chain is Glutamate--tRNA ligase, found in Xylella fastidiosa (strain M12).